The chain runs to 209 residues: Putative 3-methyladenine DNA glycosylase (209 aa).

Positions 189 to 209 (YISKTQPGPPPKKRKKGLESS) are disordered. Residues 199-209 (PKKRKKGLESS) show a composition bias toward basic residues.

The protein belongs to the DNA glycosylase MPG family.

This chain is Putative 3-methyladenine DNA glycosylase, found in Chlorobaculum tepidum (strain ATCC 49652 / DSM 12025 / NBRC 103806 / TLS) (Chlorobium tepidum).